We begin with the raw amino-acid sequence, 710 residues long: Polyribonucleotide nucleotidyltransferase (710 aa).

Residues Asp489 and Asp495 each contribute to the Mg(2+) site. The region spanning 556–615 (PKIDTIKIDVDKIKVVIGKGGETIDKIIAETGVKIDIDDEGNVSIYSSDQAAIDRTKEII) is the KH domain. Residues 625–693 (GEVYHAKVIR…EKGRVDASMK (69 aa)) enclose the S1 motif domain. Residues 691–710 (SMKALIPRPPKPEKKEEKHD) form a disordered region. Positions 700–710 (PKPEKKEEKHD) are enriched in basic and acidic residues.

The protein belongs to the polyribonucleotide nucleotidyltransferase family. Requires Mg(2+) as cofactor.

The protein resides in the cytoplasm. The catalysed reaction is RNA(n+1) + phosphate = RNA(n) + a ribonucleoside 5'-diphosphate. Involved in mRNA degradation. Catalyzes the phosphorolysis of single-stranded polyribonucleotides processively in the 3'- to 5'-direction. The polypeptide is Polyribonucleotide nucleotidyltransferase (Streptococcus pyogenes serotype M4 (strain MGAS10750)).